Reading from the N-terminus, the 271-residue chain is TIP41-like protein (271 aa).

Lysine 106 carries the N6-acetyllysine modification. Residues 173–271 (RVMPSSFFLL…PVDSQSTPSE (99 aa)) are interaction with PPP2CA. A phosphoserine mark is found at serine 265 and serine 270.

It belongs to the TIP41 family. Interacts with PPP2CA. Interacts with PPP2CB, PPP4C and PPP6C. Interacts with IGBP1; the interaction is dependent on PPP2CA. Associates with a protein phosphatase 2A PP2A(C):IGBP1 complex. Interacts with PPP4C and PPP4R2.

The protein resides in the cytoplasm. Its function is as follows. May be a allosteric regulator of serine/threonine-protein phosphatase 2A (PP2A). Inhibits catalytic activity of the PP2A(D) core complex in vitro. The PP2A(C):TIPRL complex does not show phosphatase activity. Acts as a negative regulator of serine/threonine-protein phosphatase 4 probably by inhibiting the formation of the active PPP4C:PPP4R2 complex; the function is proposed to implicate it in DNA damage response by promoting H2AX phosphorylated on Ser-140 (gamma-H2AX). May play a role in the regulation of ATM/ATR signaling pathway controlling DNA replication and repair. The chain is TIP41-like protein (Tiprl) from Mus musculus (Mouse).